We begin with the raw amino-acid sequence, 520 residues long: MSLVRLIGAEARHLAKRSYSSAAPTTKLFIDGKFVESKTNEWIDVHDPATNQVVTRVPKATQAEMQAALESNKKAFRSWSNQSILTRQQVMFKLQALIKENMGELAKNITKEQGKTLADAEGDVLRGLQVVEHCCSIPSLQMGETVANVARDMDTYSLVLPLGVTAGVAPFNFPAMIPLWMFPVAITTGNTMLLKPSERVPGATMLLMELLNEAGCPPGVVNVIHGQHDAVNFICDAPEIKAVSFVGSDQAGKYIYERAGKNGKRVQSNMGAKNHGIILGDANKENTLNQLAGAAFGAAGQRCMALSTAVFVGDAQAWIPDLVERAQKLKVNAGHVPGTDVGPVISAASRQRINDLIESGVKEGAKLILDGRKITVPGYEDGYFVGPTILSDVTPSMKCYTEEIFGPVLVILKADTLDDAIGIVNANPYGNGTAVFTTNGAAARKFVNEIDAGQVGVNVPIPVPLPMFSFTGTRGSFRGDHHFYGKQGIKFYTQTKTVTQLWRKTDVTHTQAAVAMPTMK.

NAD(+) contacts are provided by Ala-169, Phe-171, Lys-195, Glu-198, Arg-199, and Ser-248. The Nucleophile role is filled by Cys-303. Glu-403 is an NAD(+) binding site.

Belongs to the aldehyde dehydrogenase family. Homotetramer.

It is found in the mitochondrion. It catalyses the reaction 2-methyl-3-oxopropanoate + NAD(+) + CoA + H2O = propanoyl-CoA + hydrogencarbonate + NADH + H(+). The catalysed reaction is 3-oxopropanoate + NAD(+) + CoA + H2O = hydrogencarbonate + acetyl-CoA + NADH + H(+). Its function is as follows. Probable malonate and methylmalonate semialdehyde dehydrogenase involved in the catabolism of valine, thymine, and compounds catabolized by way of beta-alanine, including uracil and cytidine. The polypeptide is Probable methylmalonate-semialdehyde/malonate-semialdehyde dehydrogenase [acylating], mitochondrial (Drosophila melanogaster (Fruit fly)).